The primary structure comprises 341 residues: HTH-type transcriptional repressor PurR (341 aa).

An HTH lacI-type domain is found at Ala-2 to Val-56. Residues Ile-4–Asn-23 constitute a DNA-binding region (H-T-H motif). The DNA-binding element occupies Ser-48 to Val-56. 5 residues coordinate hypoxanthine: Tyr-73, Arg-190, Thr-192, Phe-221, and Asp-275.

In terms of assembly, homodimer.

Its pathway is purine metabolism; purine nucleotide biosynthesis [regulation]. Its function is as follows. Is the main repressor of the genes involved in the de novo synthesis of purine nucleotides, regulating purB, purC, purEK, purF, purHD, purL, purMN and guaBA expression. PurR is allosterically activated to bind its cognate DNA by binding the purine corepressors, hypoxanthine or guanine, thereby effecting transcription repression. The sequence is that of HTH-type transcriptional repressor PurR from Shigella dysenteriae serotype 1 (strain Sd197).